Consider the following 955-residue polypeptide: Glycine dehydrogenase (decarboxylating) (955 aa).

N6-(pyridoxal phosphate)lysine is present on K705.

Belongs to the GcvP family. The glycine cleavage system is composed of four proteins: P, T, L and H. It depends on pyridoxal 5'-phosphate as a cofactor.

It carries out the reaction N(6)-[(R)-lipoyl]-L-lysyl-[glycine-cleavage complex H protein] + glycine + H(+) = N(6)-[(R)-S(8)-aminomethyldihydrolipoyl]-L-lysyl-[glycine-cleavage complex H protein] + CO2. Its function is as follows. The glycine cleavage system catalyzes the degradation of glycine. The P protein binds the alpha-amino group of glycine through its pyridoxal phosphate cofactor; CO(2) is released and the remaining methylamine moiety is then transferred to the lipoamide cofactor of the H protein. The chain is Glycine dehydrogenase (decarboxylating) from Aliivibrio fischeri (strain MJ11) (Vibrio fischeri).